We begin with the raw amino-acid sequence, 524 residues long: Protein-export membrane protein SecD (524 aa).

The next 6 helical transmembrane spans lie at 10–30 (VIFLVAAILLSTFALFSPTMG), 366–386 (KFDSLITGIVAVLAVAGVVFI), 389–409 (GKPQVALPMIVTGLSEVYILL), 420–442 (DLSVIAGFIAVIGTGVDDLIIIA), 465–485 (FWVIGAAAATTIIAMSPLAVL), and 487–507 (LGDLQGFAIFTILGVIVGVLV).

The protein belongs to the SecD/SecF family. SecD subfamily. Part of the protein translocation apparatus. Forms a homodimer and complexes with SecF.

The protein localises to the cell membrane. Functionally, involved in protein export. In Haloferax volcanii (strain ATCC 29605 / DSM 3757 / JCM 8879 / NBRC 14742 / NCIMB 2012 / VKM B-1768 / DS2) (Halobacterium volcanii), this protein is Protein-export membrane protein SecD.